The primary structure comprises 443 residues: Postreplication repair E3 ubiquitin-protein ligase rad18 (443 aa).

The RING-type zinc-finger motif lies at 30-68 (CQVCKDFFDNPVITSCSHTFCSLCIRRCLSTEGKCPTCR). The interval 106 to 157 (GTDDSGDLAAEEPASKKRKIEPNAIVGTDGLPEEGIRTRSQSRGASRQPQAT) is disordered. Residues 143 to 157 (TRSQSRGASRQPQAT) show a composition bias toward polar residues. Residues 175-202 (LVPCPVCGRRMKEEAVFRHLDSCTGTAE) form a UBZ4-type zinc finger. The Zn(2+) site is built by cysteine 178, cysteine 181, histidine 193, and cysteine 197. One can recognise an SAP domain in the interval 239 to 273 (LKDTVLRKKLKDLGIPNWGPRALLQRRHTEWLNLW). Composition is skewed to polar residues over residues 350–363 (IPNA…TPRS) and 431–443 (PISS…KTPH). The segment at 350–443 (IPNASQANSD…SSASTHKTPH (94 aa)) is disordered.

The protein belongs to the RAD18 family. In terms of assembly, interacts with E2 UBC2, forming a complex with ubiquitin ligase activity.

The protein localises to the nucleus. It catalyses the reaction S-ubiquitinyl-[E2 ubiquitin-conjugating enzyme]-L-cysteine + [acceptor protein]-L-lysine = [E2 ubiquitin-conjugating enzyme]-L-cysteine + N(6)-ubiquitinyl-[acceptor protein]-L-lysine.. Its pathway is protein modification; protein ubiquitination. In terms of biological role, E3 RING-finger protein, member of the UBC2/RAD6 epistasis group. Associates to the E2 ubiquitin conjugating enzyme UBC2/RAD6 to form the UBC2-RAD18 ubiquitin ligase complex involved in postreplicative repair (PRR) of damaged DNA. The chain is Postreplication repair E3 ubiquitin-protein ligase rad18 (uvsH) from Emericella nidulans (strain FGSC A4 / ATCC 38163 / CBS 112.46 / NRRL 194 / M139) (Aspergillus nidulans).